Here is a 452-residue protein sequence, read N- to C-terminus: Maltoporin (452 aa).

Residues 1–25 form the signal peptide; that stretch reads MMITLRKLPLAVAVAAGVMSAQAMA.

Belongs to the porin LamB (TC 1.B.3) family. Homotrimer formed of three 18-stranded antiparallel beta-barrels, containing three independent channels.

The protein localises to the cell outer membrane. It catalyses the reaction beta-maltose(in) = beta-maltose(out). Involved in the transport of maltose and maltodextrins. This Salmonella heidelberg (strain SL476) protein is Maltoporin.